A 172-amino-acid chain; its full sequence is Peptidyl-tRNA hydrolase (172 aa).

Position 10 (Tyr-10) interacts with tRNA. Residue His-15 is the Proton acceptor of the active site. TRNA-binding residues include Phe-59, Asn-61, and Asn-101.

Belongs to the PTH family. Monomer.

The protein resides in the cytoplasm. It carries out the reaction an N-acyl-L-alpha-aminoacyl-tRNA + H2O = an N-acyl-L-amino acid + a tRNA + H(+). Functionally, hydrolyzes ribosome-free peptidyl-tRNAs (with 1 or more amino acids incorporated), which drop off the ribosome during protein synthesis, or as a result of ribosome stalling. In terms of biological role, catalyzes the release of premature peptidyl moieties from peptidyl-tRNA molecules trapped in stalled 50S ribosomal subunits, and thus maintains levels of free tRNAs and 50S ribosomes. This is Peptidyl-tRNA hydrolase from Rubrobacter xylanophilus (strain DSM 9941 / JCM 11954 / NBRC 16129 / PRD-1).